Consider the following 467-residue polypeptide: Cobyrinate a,c-diamide synthase (467 aa).

A GATase cobBQ-type domain is found at 256-449 (RVGYAADQAF…AHIHVEGAPE (194 aa)). Cys338 acts as the Nucleophile in catalysis.

The protein belongs to the CobB/CbiA family. It depends on Mg(2+) as a cofactor.

The enzyme catalyses cob(II)yrinate + 2 L-glutamine + 2 ATP + 2 H2O = cob(II)yrinate a,c diamide + 2 L-glutamate + 2 ADP + 2 phosphate + 2 H(+). The protein operates within cofactor biosynthesis; adenosylcobalamin biosynthesis; cob(II)yrinate a,c-diamide from sirohydrochlorin (anaerobic route): step 10/10. Catalyzes the ATP-dependent amidation of the two carboxylate groups at positions a and c of cobyrinate, using either L-glutamine or ammonia as the nitrogen source. The sequence is that of Cobyrinate a,c-diamide synthase from Magnetococcus marinus (strain ATCC BAA-1437 / JCM 17883 / MC-1).